Reading from the N-terminus, the 143-residue chain is Small ribosomal subunit protein uS11c (143 aa).

Belongs to the universal ribosomal protein uS11 family. Part of the 30S ribosomal subunit.

The protein localises to the plastid. It is found in the chloroplast. In Hordeum vulgare (Barley), this protein is Small ribosomal subunit protein uS11c.